A 324-amino-acid chain; its full sequence is Beta-ketoacyl-[acyl-carrier-protein] synthase III (324 aa).

Residues Cys116 and His251 contribute to the active site. The tract at residues 252-256 is ACP-binding; it reads QANLR. Residue Asn281 is part of the active site.

Belongs to the thiolase-like superfamily. FabH family. Homodimer.

Its subcellular location is the cytoplasm. The enzyme catalyses malonyl-[ACP] + acetyl-CoA + H(+) = 3-oxobutanoyl-[ACP] + CO2 + CoA. It functions in the pathway lipid metabolism; fatty acid biosynthesis. Catalyzes the condensation reaction of fatty acid synthesis by the addition to an acyl acceptor of two carbons from malonyl-ACP. Catalyzes the first condensation reaction which initiates fatty acid synthesis and may therefore play a role in governing the total rate of fatty acid production. Possesses both acetoacetyl-ACP synthase and acetyl transacylase activities. Its substrate specificity determines the biosynthesis of branched-chain and/or straight-chain of fatty acids. The sequence is that of Beta-ketoacyl-[acyl-carrier-protein] synthase III from Xylella fastidiosa (strain 9a5c).